The chain runs to 435 residues: 3-ketoacyl-CoA thiolase (435 aa).

Cys98 functions as the Acyl-thioester intermediate in the catalytic mechanism. Residues His391 and Cys421 each act as proton acceptor in the active site.

Belongs to the thiolase-like superfamily. Thiolase family. In terms of assembly, heterotetramer of two alpha chains (FadJ) and two beta chains (FadI).

It localises to the cytoplasm. It carries out the reaction an acyl-CoA + acetyl-CoA = a 3-oxoacyl-CoA + CoA. The protein operates within lipid metabolism; fatty acid beta-oxidation. Functionally, catalyzes the final step of fatty acid oxidation in which acetyl-CoA is released and the CoA ester of a fatty acid two carbons shorter is formed. In Vibrio parahaemolyticus serotype O3:K6 (strain RIMD 2210633), this protein is 3-ketoacyl-CoA thiolase.